The primary structure comprises 178 residues: MKRALFPGRFQPPHWGHVYAIREVLKEVDELVVAVGSAQFNYIAKDPFTAGERIWMLREALREAGVDLSRVCTIPIPNVENNLEWLGRVKSYAPPFQVVYTGNPYVALLFREAGYEVRQQPMYQRERYSSTRVRELLMRGDPQWEELVPRSVAEIIKAIGGAERLRIAAAGEAEPHRW.

This sequence belongs to the archaeal NMN adenylyltransferase family.

It localises to the cytoplasm. The enzyme catalyses beta-nicotinamide D-ribonucleotide + ATP + H(+) = diphosphate + NAD(+). Its pathway is cofactor biosynthesis; NAD(+) biosynthesis; NAD(+) from nicotinamide D-ribonucleotide: step 1/1. This chain is Nicotinamide-nucleotide adenylyltransferase, found in Pyrobaculum neutrophilum (strain DSM 2338 / JCM 9278 / NBRC 100436 / V24Sta) (Thermoproteus neutrophilus).